Consider the following 751-residue polypeptide: Ribosome biogenesis protein ERB1 (751 aa).

2 disordered regions span residues 1-140 and 289-336; these read MALT…GNVP and SEPS…DPED. Acidic residues-rich tracts occupy residues 34–92 and 119–129; these read LTDE…SDSD and IEPDYDSDSST. Pro residues predominate over residues 294–305; it reads SQPPPLPAPKRP. Residues 323 to 336 are compositionally biased toward basic and acidic residues; that stretch reads EEEKQEWLKQDPED. WD repeat units lie at residues 410 to 449, 536 to 580, 582 to 621, 622 to 661, 665 to 704, and 720 to 751; these read HPKG…EIRR, PSSG…APFK, IKGA…KTLQ, PGIR…KPYK, YHSR…DLMT, and TDGL…VWCS.

This sequence belongs to the WD repeat BOP1/ERB1 family. Component of the NOP7 complex, composed of ERB1, NOP7 and YTM1. The complex is held together by ERB1, which interacts with NOP7 via its N-terminal domain and with YTM1 via a high-affinity interaction between the seven-bladed beta-propeller domains of the 2 proteins. The NOP7 complex associates with the 66S pre-ribosome.

Its subcellular location is the nucleus. It is found in the nucleolus. The protein resides in the nucleoplasm. In terms of biological role, component of the NOP7 complex, which is required for maturation of the 25S and 5.8S ribosomal RNAs and formation of the 60S ribosome. This Coprinopsis cinerea (strain Okayama-7 / 130 / ATCC MYA-4618 / FGSC 9003) (Inky cap fungus) protein is Ribosome biogenesis protein ERB1.